The primary structure comprises 436 residues: 3-ketoacyl-CoA thiolase (436 aa).

C99 serves as the catalytic Acyl-thioester intermediate. Catalysis depends on proton acceptor residues H392 and C422.

This sequence belongs to the thiolase-like superfamily. Thiolase family. Heterotetramer of two alpha chains (FadJ) and two beta chains (FadI).

Its subcellular location is the cytoplasm. It carries out the reaction an acyl-CoA + acetyl-CoA = a 3-oxoacyl-CoA + CoA. It participates in lipid metabolism; fatty acid beta-oxidation. Functionally, catalyzes the final step of fatty acid oxidation in which acetyl-CoA is released and the CoA ester of a fatty acid two carbons shorter is formed. The polypeptide is 3-ketoacyl-CoA thiolase (Yersinia pestis bv. Antiqua (strain Angola)).